Consider the following 118-residue polypeptide: Ribosome-binding factor A (118 aa).

It belongs to the RbfA family. Monomer. Binds 30S ribosomal subunits, but not 50S ribosomal subunits or 70S ribosomes.

Its subcellular location is the cytoplasm. In terms of biological role, one of several proteins that assist in the late maturation steps of the functional core of the 30S ribosomal subunit. Associates with free 30S ribosomal subunits (but not with 30S subunits that are part of 70S ribosomes or polysomes). Required for efficient processing of 16S rRNA. May interact with the 5'-terminal helix region of 16S rRNA. In Bacillus anthracis (strain A0248), this protein is Ribosome-binding factor A.